The primary structure comprises 727 residues: Procollagen-lysine,2-oxoglutarate 5-dioxygenase 1 (727 aa).

The signal sequence occupies residues 1–18 (MRPLLLLAPLGWLLLAEA). Residues Asn-163, Asn-197, and Asn-538 are each glycosylated (N-linked (GlcNAc...) asparagine). The Fe2OG dioxygenase domain maps to 636 to 727 (QFDLAFVVRY…RYIAVSFVDP (92 aa)). Fe cation-binding residues include His-656 and Asp-658. Asn-686 carries an N-linked (GlcNAc...) asparagine glycan. His-708 contributes to the Fe cation binding site. The active site involves Arg-718.

As to quaternary structure, homodimer. Identified in a complex with P3H3 and P3H4. Fe(2+) is required as a cofactor. The cofactor is L-ascorbate.

It localises to the rough endoplasmic reticulum membrane. The catalysed reaction is L-lysyl-[collagen] + 2-oxoglutarate + O2 = (5R)-5-hydroxy-L-lysyl-[collagen] + succinate + CO2. Its function is as follows. Part of a complex composed of PLOD1, P3H3 and P3H4 that catalyzes hydroxylation of lysine residues in collagen alpha chains and is required for normal assembly and cross-linkling of collagen fibrils. Forms hydroxylysine residues in -Xaa-Lys-Gly- sequences in collagens. These hydroxylysines serve as sites of attachment for carbohydrate units and are essential for the stability of the intermolecular collagen cross-links. The sequence is that of Procollagen-lysine,2-oxoglutarate 5-dioxygenase 1 (PLOD1) from Pongo abelii (Sumatran orangutan).